Reading from the N-terminus, the 422-residue chain is 2,3-bisphosphoglycerate-independent phosphoglycerate mutase (422 aa).

The disordered stretch occupies residues 173-194 (DADPKRVGKPVKDVKPTSDDPA). Residues 174–190 (ADPKRVGKPVKDVKPTS) are compositionally biased toward basic and acidic residues.

This sequence belongs to the BPG-independent phosphoglycerate mutase family. A-PGAM subfamily.

It catalyses the reaction (2R)-2-phosphoglycerate = (2R)-3-phosphoglycerate. It participates in carbohydrate degradation; glycolysis; pyruvate from D-glyceraldehyde 3-phosphate: step 3/5. Its function is as follows. Catalyzes the interconversion of 2-phosphoglycerate and 3-phosphoglycerate. The protein is 2,3-bisphosphoglycerate-independent phosphoglycerate mutase of Methanopyrus kandleri (strain AV19 / DSM 6324 / JCM 9639 / NBRC 100938).